The chain runs to 159 residues: ATP synthase subunit b (159 aa).

Residues 7-27 traverse the membrane as a helical segment; sequence TFVWTIINFLLLLVVLSYFLF.

It belongs to the ATPase B chain family. As to quaternary structure, F-type ATPases have 2 components, F(1) - the catalytic core - and F(0) - the membrane proton channel. F(1) has five subunits: alpha(3), beta(3), gamma(1), delta(1), epsilon(1). F(0) has three main subunits: a(1), b(2) and c(10-14). The alpha and beta chains form an alternating ring which encloses part of the gamma chain. F(1) is attached to F(0) by a central stalk formed by the gamma and epsilon chains, while a peripheral stalk is formed by the delta and b chains.

Its subcellular location is the cell membrane. F(1)F(0) ATP synthase produces ATP from ADP in the presence of a proton or sodium gradient. F-type ATPases consist of two structural domains, F(1) containing the extramembraneous catalytic core and F(0) containing the membrane proton channel, linked together by a central stalk and a peripheral stalk. During catalysis, ATP synthesis in the catalytic domain of F(1) is coupled via a rotary mechanism of the central stalk subunits to proton translocation. Its function is as follows. Component of the F(0) channel, it forms part of the peripheral stalk, linking F(1) to F(0). This Clostridium novyi (strain NT) protein is ATP synthase subunit b.